The following is a 446-amino-acid chain: Histone acetyltransferase type B subunit 2 (446 aa).

WD repeat units follow at residues 138-178, 189-229, 231-270, 286-326, and 330-370; these read DHPG…ITPS, GHKE…GTSK, LKYS…QIID, GHSD…SKVH, and GHQD…DEQT. The interval 372–376 is interaction with the histone H4 N-terminus; that stretch reads DDAED. The WD 6 repeat unit spans residues 387–427; that stretch reads GHTNHLADFSWNRNDPWLVCSAAEDNLLQIWKVANSIVSKE. Residues 427–446 are disordered; it reads EPADMSTPELDDPKPKQSSH. Basic and acidic residues predominate over residues 437–446; that stretch reads DDPKPKQSSH.

Belongs to the WD repeat RBAP46/RBAP48/MSI1 family. As to quaternary structure, component of the HAT-B complex composed of at least hat-1 and hat-2. The HAT-B complex binds to histone H4 tail.

Its subcellular location is the cytoplasm. It localises to the nucleus. In terms of biological role, regulatory subunit of the histone acetylase B (HAT-B) complex. The complex acetylates 'Lys-12' of histone H4 which is required for telomeric silencing. In Neurospora crassa (strain ATCC 24698 / 74-OR23-1A / CBS 708.71 / DSM 1257 / FGSC 987), this protein is Histone acetyltransferase type B subunit 2 (hat-2).